The chain runs to 158 residues: 2-C-methyl-D-erythritol 2,4-cyclodiphosphate synthase (158 aa).

A divalent metal cation contacts are provided by D9 and H11. Residues 9 to 11 (DVH) and 35 to 36 (HS) each bind 4-CDP-2-C-methyl-D-erythritol 2-phosphate. H43 contacts a divalent metal cation. 4-CDP-2-C-methyl-D-erythritol 2-phosphate is bound by residues 57–59 (DIG), 62–66 (FPDTD), 101–107 (AQKPKMA), 133–136 (TTTE), F140, and R143.

This sequence belongs to the IspF family. As to quaternary structure, homotrimer. A divalent metal cation is required as a cofactor.

The enzyme catalyses 4-CDP-2-C-methyl-D-erythritol 2-phosphate = 2-C-methyl-D-erythritol 2,4-cyclic diphosphate + CMP. The protein operates within isoprenoid biosynthesis; isopentenyl diphosphate biosynthesis via DXP pathway; isopentenyl diphosphate from 1-deoxy-D-xylulose 5-phosphate: step 4/6. Functionally, involved in the biosynthesis of isopentenyl diphosphate (IPP) and dimethylallyl diphosphate (DMAPP), two major building blocks of isoprenoid compounds. Catalyzes the conversion of 4-diphosphocytidyl-2-C-methyl-D-erythritol 2-phosphate (CDP-ME2P) to 2-C-methyl-D-erythritol 2,4-cyclodiphosphate (ME-CPP) with a corresponding release of cytidine 5-monophosphate (CMP). The sequence is that of 2-C-methyl-D-erythritol 2,4-cyclodiphosphate synthase from Bacillus cytotoxicus (strain DSM 22905 / CIP 110041 / 391-98 / NVH 391-98).